The primary structure comprises 529 residues: ATP synthase subunit alpha (529 aa).

Residue 173-180 participates in ATP binding; it reads GDRQTGKT.

The protein belongs to the ATPase alpha/beta chains family. In terms of assembly, F-type ATPases have 2 components, CF(1) - the catalytic core - and CF(0) - the membrane proton channel. CF(1) has five subunits: alpha(3), beta(3), gamma(1), delta(1), epsilon(1). CF(0) has three main subunits: a(1), b(2) and c(9-12). The alpha and beta chains form an alternating ring which encloses part of the gamma chain. CF(1) is attached to CF(0) by a central stalk formed by the gamma and epsilon chains, while a peripheral stalk is formed by the delta and b chains.

The protein localises to the cell membrane. It catalyses the reaction ATP + H2O + 4 H(+)(in) = ADP + phosphate + 5 H(+)(out). Its function is as follows. Produces ATP from ADP in the presence of a proton gradient across the membrane. The alpha chain is a regulatory subunit. The protein is ATP synthase subunit alpha of Streptomyces avermitilis (strain ATCC 31267 / DSM 46492 / JCM 5070 / NBRC 14893 / NCIMB 12804 / NRRL 8165 / MA-4680).